We begin with the raw amino-acid sequence, 638 residues long: MQKKETLEFQSEVKQLLNLMIHSLYSNKEIFLRELISNASDALDKLRFLSISDEKIKIKQNKLCIFIDYDKNKKSITIQDNGIGMSKKEVIENLGTIAKSGTKSFIKSIEKSNSEKNNQLIGKFGVGFYSVFIVSEKVLVLTRSFKENEKNGVLWESSGKGEYTISNIIKKDVGTEITIFLKESEKEFCDELNIKNIVLKYSNHINFPIKLKTKITKDNKILTPEEKKSYTWKQINTGKSLWSKKKSEIKDIEYKEFYKNFFNDNYDPLIWSHNHVEGKQEYVSLLYIPRKASWDIWNREHKHGLKLYVKKVFIMDQSSEFIPNYLRFIKGIIDSNDLPLNVSREILQNNENIYKIKINLTKKALLMLENLSKNHPDEYKLFWKEFGLILKEGPSEDIKNYENVIKLFRFSSTYINSENQEVSLEDYVKRMQSGQNKIFYITSDNYLSAKNNPHLEKLKEKKIEVLLLFDRIDEWMMNYMTEFKKIKFQSISKYSSYLENIFKDENNDQKNTEQKLSTIILRIKSYLKDRVKDVRFTSKLTNSPSTVTTDENDITTQMSKLLISTGQESPEIKYIFELNANHPIIKHVFNIEDKNIFNNWIELLFEESILSERGNLDDPNKFIHRINNLLLSNIIRLN.

The a; substrate-binding stretch occupies residues 1–344 (MQKKETLEFQ…SNDLPLNVSR (344 aa)). The segment at 345 to 560 (EILQNNENIY…ENDITTQMSK (216 aa)) is b. Positions 561-638 (LLISTGQESP…LLLSNIIRLN (78 aa)) are c.

Belongs to the heat shock protein 90 family. In terms of assembly, homodimer.

The protein localises to the cytoplasm. Its function is as follows. Molecular chaperone. Has ATPase activity. The polypeptide is Chaperone protein HtpG (Wigglesworthia glossinidia brevipalpis).